The primary structure comprises 246 residues: uncharacterized protein (246 aa).

Helical transmembrane passes span 7-27, 50-70, 99-119, 135-155, 163-183, and 219-239; these read KVTL…ALII, LNIL…SMEF, VSFY…LLFF, LALI…GLLC, AVAV…VQLM, and FSIG…WWCF.

It is found in the cell membrane. This is an uncharacterized protein from Bacillus subtilis (strain 168).